The primary structure comprises 103 residues: Large ribosomal subunit protein bL21 (103 aa).

It belongs to the bacterial ribosomal protein bL21 family. As to quaternary structure, part of the 50S ribosomal subunit. Contacts protein L20.

Functionally, this protein binds to 23S rRNA in the presence of protein L20. The sequence is that of Large ribosomal subunit protein bL21 from Shewanella sp. (strain MR-7).